Reading from the N-terminus, the 130-residue chain is MKIFGRVVSGFGEGKYFVGLIPYKNKFKELTGFTPYEGTLNIKLKTYFDIDKYDPLEFDGFEIDGKEYFGGKVLLVTLFNKSGKFVDCAIVSPKKTDHSKKTLEIIAPVNLRKFLSLKNLDIVKIIQALK.

Residue 10-15 (GFGEGK) coordinates CDP. Residues Thr-39 and Asn-41 each coordinate Mg(2+). Thr-96 and Glu-104 together coordinate FMN. 109-112 (VNLR) contacts CDP.

Belongs to the archaeal riboflavin kinase family. It depends on Mg(2+) as a cofactor.

The enzyme catalyses riboflavin + CTP = CDP + FMN + H(+). The protein operates within cofactor biosynthesis; FMN biosynthesis; FMN from riboflavin (CTP route): step 1/1. Catalyzes the CTP-dependent phosphorylation of riboflavin (vitamin B2) to form flavin mononucleotide (FMN). The chain is Riboflavin kinase from Methanococcus vannielii (strain ATCC 35089 / DSM 1224 / JCM 13029 / OCM 148 / SB).